The primary structure comprises 462 residues: Chromosomal replication initiator protein DnaA (462 aa).

The tract at residues 1–83 is domain I, interacts with DnaA modulators; the sequence is MSLSLWQQCL…LRFEVGSKPA (83 aa). The segment at 83-125 is domain II; the sequence is AARAHNNPVTASVSAPVAPVTRSAPMRPSWDNSPAQPELSYRS. Residues 104–125 are disordered; sequence RSAPMRPSWDNSPAQPELSYRS. The span at 112–125 shows a compositional bias: polar residues; sequence WDNSPAQPELSYRS. The interval 126 to 342 is domain III, AAA+ region; sequence NVNPKHTFDN…GALNRVIANA (217 aa). Gly-170, Gly-172, Lys-173, and Thr-174 together coordinate ATP. The tract at residues 343-462 is domain IV, binds dsDNA; it reads NFTGRAITID…FSNLIRTLSS (120 aa).

It belongs to the DnaA family. Oligomerizes as a right-handed, spiral filament on DNA at oriC.

It localises to the cytoplasm. Its function is as follows. Plays an essential role in the initiation and regulation of chromosomal replication. ATP-DnaA binds to the origin of replication (oriC) to initiate formation of the DNA replication initiation complex once per cell cycle. Binds the DnaA box (a 9 base pair repeat at the origin) and separates the double-stranded (ds)DNA. Forms a right-handed helical filament on oriC DNA; dsDNA binds to the exterior of the filament while single-stranded (ss)DNA is stabiized in the filament's interior. The ATP-DnaA-oriC complex binds and stabilizes one strand of the AT-rich DNA unwinding element (DUE), permitting loading of DNA polymerase. After initiation quickly degrades to an ADP-DnaA complex that is not apt for DNA replication. Binds acidic phospholipids. The protein is Chromosomal replication initiator protein DnaA of Yersinia pseudotuberculosis serotype O:1b (strain IP 31758).